Reading from the N-terminus, the 155-residue chain is Cyanate hydratase (155 aa).

Active-site residues include Arg-92, Glu-95, and Ser-118.

This sequence belongs to the cyanase family.

The catalysed reaction is cyanate + hydrogencarbonate + 3 H(+) = NH4(+) + 2 CO2. Functionally, catalyzes the reaction of cyanate with bicarbonate to produce ammonia and carbon dioxide. The chain is Cyanate hydratase from Mycobacterium avium (strain 104).